The chain runs to 104 residues: MSLYRSKVWCVYIVRRDDGQLYTGITSDLSRRLGEHARGVGARCLRGAKRLQLLYCSASAYDHKTAAQMEYHLKRKRGKYFKLRLIKAQPRFLHQYLSADKPLR.

Residues 7-83 form the GIY-YIG domain; the sequence is KVWCVYIVRR…KRKRGKYFKL (77 aa).

This sequence belongs to the UPF0213 family.

The protein is UPF0213 protein ORF82 of Orgyia pseudotsugata (Douglas-fir tussock moth).